Here is a 605-residue protein sequence, read N- to C-terminus: Isocitrate dehydrogenase kinase/phosphatase (605 aa).

Residues 327–333 (APGIKGL) and K348 contribute to the ATP site. The active site involves D383.

It belongs to the AceK family.

It localises to the cytoplasm. The enzyme catalyses L-seryl-[isocitrate dehydrogenase] + ATP = O-phospho-L-seryl-[isocitrate dehydrogenase] + ADP + H(+). Its function is as follows. Bifunctional enzyme which can phosphorylate or dephosphorylate isocitrate dehydrogenase (IDH) on a specific serine residue. This is a regulatory mechanism which enables bacteria to bypass the Krebs cycle via the glyoxylate shunt in response to the source of carbon. When bacteria are grown on glucose, IDH is fully active and unphosphorylated, but when grown on acetate or ethanol, the activity of IDH declines drastically concomitant with its phosphorylation. This chain is Isocitrate dehydrogenase kinase/phosphatase, found in Burkholderia lata (strain ATCC 17760 / DSM 23089 / LMG 22485 / NCIMB 9086 / R18194 / 383).